Here is a 670-residue protein sequence, read N- to C-terminus: Methionine--tRNA ligase (670 aa).

A 'HIGH' region motif is present at residues 14-24 (PYANGHLHLGH). Residues C145, C148, C158, and C161 each contribute to the Zn(2+) site. A 'KMSKS' region motif is present at residues 330–334 (KMSKS). ATP is bound at residue K333. Residues 570–670 (DFAKVDLRIA…AGALPGMKVK (101 aa)) enclose the tRNA-binding domain.

It belongs to the class-I aminoacyl-tRNA synthetase family. MetG type 1 subfamily. Homodimer. Zn(2+) serves as cofactor.

It is found in the cytoplasm. It carries out the reaction tRNA(Met) + L-methionine + ATP = L-methionyl-tRNA(Met) + AMP + diphosphate. In terms of biological role, is required not only for elongation of protein synthesis but also for the initiation of all mRNA translation through initiator tRNA(fMet) aminoacylation. This chain is Methionine--tRNA ligase, found in Legionella pneumophila subsp. pneumophila (strain Philadelphia 1 / ATCC 33152 / DSM 7513).